A 364-amino-acid polypeptide reads, in one-letter code: tRNA/tmRNA (uracil-C(5))-methyltransferase (364 aa).

Q186, Y214, N219, E235, and D295 together coordinate S-adenosyl-L-methionine. C320 (nucleophile) is an active-site residue. The Proton acceptor role is filled by E354.

The protein belongs to the class I-like SAM-binding methyltransferase superfamily. RNA M5U methyltransferase family. TrmA subfamily.

The catalysed reaction is uridine(54) in tRNA + S-adenosyl-L-methionine = 5-methyluridine(54) in tRNA + S-adenosyl-L-homocysteine + H(+). It catalyses the reaction uridine(341) in tmRNA + S-adenosyl-L-methionine = 5-methyluridine(341) in tmRNA + S-adenosyl-L-homocysteine + H(+). Functionally, dual-specificity methyltransferase that catalyzes the formation of 5-methyluridine at position 54 (m5U54) in all tRNAs, and that of position 341 (m5U341) in tmRNA (transfer-mRNA). The protein is tRNA/tmRNA (uracil-C(5))-methyltransferase of Azoarcus sp. (strain BH72).